Consider the following 24-residue polypeptide: Defensin D6 (24 aa).

This sequence belongs to the DEFL family. Group IV subfamily. Distributed in the epidermal cell layer of leaves and in the subepidermal layer region of stems. Not in roots.

Its subcellular location is the secreted. It localises to the cell wall. Its function is as follows. Antimicrobial peptide. Active against Fusarium spp., Gram-positive and Gram-negative bacterial pathogens. The sequence is that of Defensin D6 from Spinacia oleracea (Spinach).